Consider the following 574-residue polypeptide: Sulfate adenylyltransferase (574 aa).

The interval 1–169 (MANTPHGGVL…LEAVNKLNHY (169 aa)) is N-terminal. Positions 170–394 (DYVGLRYTPA…LRESSPPRAL (225 aa)) are catalytic. Glutamine 197 provides a ligand contact to sulfate. ATP is bound by residues 197–200 (QTRN) and 291–294 (GRDH). Residues threonine 198, arginine 199, and asparagine 200 contribute to the active site. Position 199 (arginine 199) interacts with sulfate. Alanine 295 provides a ligand contact to sulfate. Valine 333 contributes to the ATP binding site. The allosteric regulation domain; adenylyl-sulfate kinase-like stretch occupies residues 395-574 (QGFTIFLTGY…LESEGYFERL (180 aa)). Residues 434–437 (DTVR), arginine 451, 477–478 (IA), and arginine 516 each bind 3'-phosphoadenylyl sulfate.

This sequence in the N-terminal section; belongs to the sulfate adenylyltransferase family. In the C-terminal section; belongs to the APS kinase family. Homohexamer. Dimer of trimers.

The protein resides in the cytoplasm. The catalysed reaction is sulfate + ATP + H(+) = adenosine 5'-phosphosulfate + diphosphate. It functions in the pathway sulfur metabolism; hydrogen sulfide biosynthesis; sulfite from sulfate: step 1/3. Its activity is regulated as follows. Allosterically inhibited by 3'-phosphoadenosine 5'-phosphosulfate (PAPS). Catalyzes the first intracellular reaction of sulfate assimilation, forming adenosine-5'-phosphosulfate (APS) from inorganic sulfate and ATP. Plays an important role in sulfate activation as a component of the biosynthesis pathway of sulfur-containing amino acids. The polypeptide is Sulfate adenylyltransferase (Emericella nidulans (strain FGSC A4 / ATCC 38163 / CBS 112.46 / NRRL 194 / M139) (Aspergillus nidulans)).